We begin with the raw amino-acid sequence, 76 residues long: Small ribosomal subunit protein bS18 (76 aa).

The protein belongs to the bacterial ribosomal protein bS18 family. As to quaternary structure, part of the 30S ribosomal subunit. Forms a tight heterodimer with protein bS6.

Binds as a heterodimer with protein bS6 to the central domain of the 16S rRNA, where it helps stabilize the platform of the 30S subunit. The polypeptide is Small ribosomal subunit protein bS18 (Stenotrophomonas maltophilia (strain R551-3)).